We begin with the raw amino-acid sequence, 191 residues long: Stress response regulator protein 1 (191 aa).

The 120-residue stretch at 62–181 (SFLLVDDNEI…TNYILQKIEQ (120 aa)) folds into the Response regulatory domain. Aspartate 114 bears the 4-aspartylphosphate mark.

Functionally, required for stress adaptation, morphogenesis and virulence. This is Stress response regulator protein 1 (SRR1) from Clavispora lusitaniae (strain ATCC 42720) (Yeast).